The primary structure comprises 399 residues: MQTLAGKKILLGISGGIAAYKCAELTRRLIERGAQVQVVMTKAAKEFITPLTMQAVSGRPVSDSLLDPAAEASMGHIELAKWADLVLLAPATADLIARMSAGMGNDLLTTLVLATDSPVAVSPAMNQQMYRNIATQENIATLARRGMNIWGPAAGEQACGDVGPGRMLEPMQLVHLCEQFFQPKVLEGKSILISAGPTREAIDPVRYITNHSSGKMGYALANAAAQLGAKVTLVSGPVNLSTPMGVERINVSSAQEMYEAVMAQAISHDAFISCAAVADYRPEAIASQKLKKTADNDQMTIKMVKNPDIVASVAALTDKRPFTVGFAAETNDVETYARGKLAKKNLNMICANDVSVEGQGFNSNDNAITLFWPDGELALALESKEALSFKILEKMRELM.

Residues 1 to 190 (MQTLAGKKIL…FQPKVLEGKS (190 aa)) are phosphopantothenoylcysteine decarboxylase. C159 (proton donor) is an active-site residue. The phosphopantothenate--cysteine ligase stretch occupies residues 191 to 399 (ILISAGPTRE…KILEKMRELM (209 aa)). CTP contacts are provided by residues D279, K289, 307 to 310 (PDIV), F326, K340, and K344.

It in the N-terminal section; belongs to the HFCD (homo-oligomeric flavin containing Cys decarboxylase) superfamily. In the C-terminal section; belongs to the PPC synthetase family. Mg(2+) serves as cofactor. Requires FMN as cofactor.

The enzyme catalyses N-[(R)-4-phosphopantothenoyl]-L-cysteine + H(+) = (R)-4'-phosphopantetheine + CO2. The catalysed reaction is (R)-4'-phosphopantothenate + L-cysteine + CTP = N-[(R)-4-phosphopantothenoyl]-L-cysteine + CMP + diphosphate + H(+). It functions in the pathway cofactor biosynthesis; coenzyme A biosynthesis; CoA from (R)-pantothenate: step 2/5. The protein operates within cofactor biosynthesis; coenzyme A biosynthesis; CoA from (R)-pantothenate: step 3/5. Catalyzes two sequential steps in the biosynthesis of coenzyme A. In the first step cysteine is conjugated to 4'-phosphopantothenate to form 4-phosphopantothenoylcysteine. In the second step the latter compound is decarboxylated to form 4'-phosphopantotheine. This is Coenzyme A biosynthesis bifunctional protein CoaBC from Vibrio parahaemolyticus serotype O3:K6 (strain RIMD 2210633).